Reading from the N-terminus, the 152-residue chain is Small ribosomal subunit protein uS15 (152 aa).

The segment covering 1–10 has biased composition (basic residues); that stretch reads MARMYARRRG. The tract at residues 1–24 is disordered; the sequence is MARMYARRRGTSSSVRPYRKEAPE.

Belongs to the universal ribosomal protein uS15 family. Part of the 30S ribosomal subunit.

The sequence is that of Small ribosomal subunit protein uS15 from Methanoculleus marisnigri (strain ATCC 35101 / DSM 1498 / JR1).